The primary structure comprises 116 residues: G antigen 10 (116 aa).

Positions 1–116 (MSWRGRSTYR…PEEGEKQSQC (116 aa)) are disordered. Positions 31–44 (FSDEVEPATPEEGE) are enriched in acidic residues. Basic and acidic residues-rich tracts occupy residues 71-80 (PEADSQEQVH) and 102-116 (EEVK…QSQC).

Belongs to the GAGE family.

This Homo sapiens (Human) protein is G antigen 10 (GAGE10).